A 40-amino-acid chain; its full sequence is Snaclec tokaracetin subunit beta (40 aa).

A disulfide bond links Cys2 and Cys13. The 32-residue stretch at 9–40 folds into the C-type lectin domain; it reads YDEHCYRVFQQKMNWEDAEKFCTQQHKGXHLX.

This sequence belongs to the snaclec family. Heterodimer of subunits alpha and beta; disulfide-linked. Expressed by the venom gland.

The protein localises to the secreted. Functionally, platelet antagonist that specifically and reversibly binds to a site on platelet glycoprotein Ibalpha (GP1BA) close to or identical with the site for vWF binding. It inhibits the binding of vWF to platelets and vWF-dependent shear-induced platelet aggregation. The chain is Snaclec tokaracetin subunit beta from Protobothrops tokarensis (Tokara habu).